Here is a 58-residue protein sequence, read N- to C-terminus: uncharacterized protein (58 aa).

This is an uncharacterized protein from Treponema pallidum (strain Nichols).